The following is a 493-amino-acid chain: Putative glycerol-3-phosphate transporter 5 (493 aa).

Helical transmembrane passes span 25-44 (FTFH…ASFH), 83-103 (LGEL…FAGH), 113-133 (FLVF…LGYW), 145-165 (VQIV…SVVG), 185-205 (SVGN…GWGW), 207-227 (FVLP…FLVV), 292-312 (FCLF…PYYL), 328-348 (GILS…AGFI), 352-372 (IKAR…ALIM), 375-395 (VYGS…GLLV), 428-448 (AIID…AGYI), and 452-472 (GWNS…LFLV).

Belongs to the major facilitator superfamily. Organophosphate:Pi antiporter (OPA) (TC 2.A.1.4) family.

Its subcellular location is the membrane. The chain is Putative glycerol-3-phosphate transporter 5 from Arabidopsis thaliana (Mouse-ear cress).